Reading from the N-terminus, the 692-residue chain is DNA repair protein RAD34 (692 aa).

The tract at residues 1–38 is disordered; the sequence is MAKRLLESSQNDQANRKNSKIEKKEVSFYEEEETDDSF. Over residues 28–38 the composition is skewed to acidic residues; it reads FYEEEETDDSF.

Belongs to the XPC family.

The protein resides in the nucleus. Its function is as follows. Involved in nucleotide excision repair (NER) of damaged ribosomal DNA (rDNA). Required for the repair of the RNA polymerase I-transcribed strand of rDNA. The chain is DNA repair protein RAD34 (RAD34) from Saccharomyces cerevisiae (strain ATCC 204508 / S288c) (Baker's yeast).